Here is a 169-residue protein sequence, read N- to C-terminus: Queuosine precursor transporter QueT (169 aa).

5 consecutive transmembrane segments (helical) span residues 9–29 (IVTIAIVAALYVILTMTPGLS), 44–64 (LNFTAFFNKKYIIAVTIGCMI), 73–93 (VDVIVGGLSTLVFLSLGVLLF), 110–130 (FFFFAIFFSISMFTIALELKF), and 137–157 (LLTWGTLALGEFASLFIGAFI).

Belongs to the vitamin uptake transporter (VUT/ECF) (TC 2.A.88) family. In E.coli forms a stable energy-coupling factor (ECF) transporter complex composed of 2 membrane-embedded substrate-binding protein (S component), 2 ATP-binding proteins (A and A' components) and 2 transmembrane proteins (T component), probably with a stoichiometry of 2:1:1:2. May be able to interact with more than 1 S component at a time.

It is found in the cell membrane. In terms of biological role, probably a queuosine precursor-binding protein that interacts with the energy-coupling factor (ECF) ABC-transporter complex. Unlike classic ABC transporters this ECF transporter provides the energy necessary to transport a number of different substrates. The substrates themselves are bound by transmembrane, not extracytoplasmic soluble proteins. The sequence is that of Queuosine precursor transporter QueT (queT) from Lactococcus lactis subsp. cremoris (strain MG1363).